The sequence spans 89 residues: Small ribosomal subunit protein uS15 (89 aa).

The protein belongs to the universal ribosomal protein uS15 family. As to quaternary structure, part of the 30S ribosomal subunit. Forms a bridge to the 50S subunit in the 70S ribosome, contacting the 23S rRNA.

One of the primary rRNA binding proteins, it binds directly to 16S rRNA where it helps nucleate assembly of the platform of the 30S subunit by binding and bridging several RNA helices of the 16S rRNA. Functionally, forms an intersubunit bridge (bridge B4) with the 23S rRNA of the 50S subunit in the ribosome. This Trichodesmium erythraeum (strain IMS101) protein is Small ribosomal subunit protein uS15.